The chain runs to 323 residues: Acetyl-coenzyme A carboxylase carboxyl transferase subunit alpha (323 aa).

One can recognise a CoA carboxyltransferase C-terminal domain in the interval 39–293 (RLSKKSQQLT…RRALADSLRQ (255 aa)).

Belongs to the AccA family. In terms of assembly, acetyl-CoA carboxylase is a heterohexamer composed of biotin carboxyl carrier protein (AccB), biotin carboxylase (AccC) and two subunits each of ACCase subunit alpha (AccA) and ACCase subunit beta (AccD).

The protein localises to the cytoplasm. It catalyses the reaction N(6)-carboxybiotinyl-L-lysyl-[protein] + acetyl-CoA = N(6)-biotinyl-L-lysyl-[protein] + malonyl-CoA. It participates in lipid metabolism; malonyl-CoA biosynthesis; malonyl-CoA from acetyl-CoA: step 1/1. Its function is as follows. Component of the acetyl coenzyme A carboxylase (ACC) complex. First, biotin carboxylase catalyzes the carboxylation of biotin on its carrier protein (BCCP) and then the CO(2) group is transferred by the carboxyltransferase to acetyl-CoA to form malonyl-CoA. This is Acetyl-coenzyme A carboxylase carboxyl transferase subunit alpha from Paraburkholderia phytofirmans (strain DSM 17436 / LMG 22146 / PsJN) (Burkholderia phytofirmans).